The sequence spans 521 residues: HTH-type transcriptional regulatory protein TyrR (521 aa).

An ACT domain is found at arginine 2–tyrosine 72. Residues glutamate 78–isoleucine 120 form the PAS domain. A Sigma-54 factor interaction domain is found at isoleucine 207–threonine 436. Residues glycine 235 to aspartate 242 and alanine 298 to glutamate 307 each bind ATP. Residues serine 489–arginine 509 constitute a DNA-binding region (H-T-H motif).

Homodimer. In presence of tyrosine (or high concentrations of phenylalanine or tryptophan) and ATP, it self-associates to form an hexamer.

It localises to the cytoplasm. Its function is as follows. Dual transcriptional regulator of the TyrR regulon, which includes a number of genes coding for proteins involved in the biosynthesis or transport of the three aromatic amino acids, phenylalanine, tyrosine and tryptophan. These three aromatic amino acids act as effectors which bind to the TyrR protein to form an active regulatory protein. Acts by binding specifically to TyrR boxes in the promoter region of the target genes. This is HTH-type transcriptional regulatory protein TyrR from Enterobacter agglomerans (Erwinia herbicola).